The following is an 86-amino-acid chain: Large ribosomal subunit protein eL20 (86 aa).

This sequence belongs to the eukaryotic ribosomal protein eL20 family. Part of the 50S ribosomal subunit. Binds 23S rRNA.

The protein is Large ribosomal subunit protein eL20 of Saccharolobus islandicus (strain Y.N.15.51 / Yellowstone #2) (Sulfolobus islandicus).